A 356-amino-acid chain; its full sequence is Uroporphyrinogen decarboxylase (356 aa).

Residues 23 to 27 (RQAGR), Asp72, Tyr148, Ser203, and His321 contribute to the substrate site.

This sequence belongs to the uroporphyrinogen decarboxylase family. As to quaternary structure, homodimer.

The protein resides in the cytoplasm. The enzyme catalyses uroporphyrinogen III + 4 H(+) = coproporphyrinogen III + 4 CO2. The protein operates within porphyrin-containing compound metabolism; protoporphyrin-IX biosynthesis; coproporphyrinogen-III from 5-aminolevulinate: step 4/4. Catalyzes the decarboxylation of four acetate groups of uroporphyrinogen-III to yield coproporphyrinogen-III. The sequence is that of Uroporphyrinogen decarboxylase from Chloroflexus aggregans (strain MD-66 / DSM 9485).